We begin with the raw amino-acid sequence, 253 residues long: MLSDVKIKVRDLNLYYGNFQALKNISLDIYKNEVTALIGPSGCGKSTFLRTLNRMNDLIPGVRIEGSILFDGVDIYKENFDVVELRKRVGMVFQSPNPFPKSVYENVAYAPKIHGLKDKRKLDEIVEKSLRGAALWDEVKDRLHKPATGLSGGQQQRLCIARALAIEPEVLLMDEPTSALDPISTMRIEELIQELKKKYTIVIVTHNMQQAARISDRTAFFLNGELIEMDRTEVIFTKPRDRRTEDYITGRFG.

The ABC transporter domain occupies 7 to 248; it reads IKVRDLNLYY…PRDRRTEDYI (242 aa). 39–46 contributes to the ATP binding site; it reads GPSGCGKS.

It belongs to the ABC transporter superfamily. Phosphate importer (TC 3.A.1.7) family. As to quaternary structure, the complex is composed of two ATP-binding proteins (PstB), two transmembrane proteins (PstC and PstA) and a solute-binding protein (PstS).

It is found in the cell membrane. It catalyses the reaction phosphate(out) + ATP + H2O = ADP + 2 phosphate(in) + H(+). In terms of biological role, part of the ABC transporter complex PstSACB involved in phosphate import. Responsible for energy coupling to the transport system. This Carboxydothermus hydrogenoformans (strain ATCC BAA-161 / DSM 6008 / Z-2901) protein is Phosphate import ATP-binding protein PstB.